A 63-amino-acid chain; its full sequence is Sarcotoxin-1B (63 aa).

Residues 1-23 (MNFNKVFIFVALILAVFAGQSQA) form the signal peptide. Arginine amide is present on arginine 62.

Belongs to the cecropin family.

Its subcellular location is the secreted. In terms of biological role, sarcotoxins, which are potent bactericidal proteins, are produced in response to injury. They are cytotoxic to both Gram-positive and Gram-negative bacteria. The protein is Sarcotoxin-1B of Sarcophaga peregrina (Flesh fly).